Consider the following 267-residue polypeptide: Digeranylgeranylglyceryl phosphate synthase (267 aa).

Helical transmembrane passes span 10-30, 33-53, 80-100, 104-121, 139-159, 198-218, and 247-267; these read ANCVMAGAASLTGMLVSGALL, LHTPVLVFSAVLLITGGGNAI, AALIWSVALFIAGCLIAGLIN, LALALLNSFVLIIYAARL, TFLFGGLAASPSSITAFLSIL, VLASLVLIVAMLLSYLVPLGI, and QRWIKMGMGMALVAFLIGYHI.

The protein belongs to the UbiA prenyltransferase family. DGGGP synthase subfamily. Mg(2+) is required as a cofactor.

The protein localises to the cell membrane. The enzyme catalyses sn-3-O-(geranylgeranyl)glycerol 1-phosphate + (2E,6E,10E)-geranylgeranyl diphosphate = 2,3-bis-O-(geranylgeranyl)-sn-glycerol 1-phosphate + diphosphate. Its pathway is membrane lipid metabolism; glycerophospholipid metabolism. Its function is as follows. Prenyltransferase that catalyzes the transfer of the geranylgeranyl moiety of geranylgeranyl diphosphate (GGPP) to the C2 hydroxyl of (S)-3-O-geranylgeranylglyceryl phosphate (GGGP). This reaction is the second ether-bond-formation step in the biosynthesis of archaeal membrane lipids. This chain is Digeranylgeranylglyceryl phosphate synthase, found in Methanothrix thermoacetophila (strain DSM 6194 / JCM 14653 / NBRC 101360 / PT) (Methanosaeta thermophila).